A 153-amino-acid chain; its full sequence is Partner of bursicon (153 aa).

Residues 1 to 35 (MCNSVRTALAASNCCSIVLCCVLLLTLTLTVAVTA) form the signal peptide. 5 cysteine pairs are disulfide-bonded: Cys44-Cys102, Cys68-Cys117, Cys77-Cys143, Cys81-Cys145, and Cys99-Cys148. One can recognise a CTCK domain in the interval 44 to 139 (CETLPSEIHL…SATMEIRLKE (96 aa)).

As to quaternary structure, heterodimer of burs and pburs.

It localises to the secreted. Final heterodimeric neurohormone released at the end of the molting cycle, involved in the sclerotization (tanning) of the insect cuticle, melanization and wing spreading. In Anopheles gambiae (African malaria mosquito), this protein is Partner of bursicon.